Consider the following 586-residue polypeptide: Arginine--tRNA ligase (586 aa).

Residues 128–138 (ANPTGPLHVGH) carry the 'HIGH' region motif.

It belongs to the class-I aminoacyl-tRNA synthetase family. In terms of assembly, monomer.

It is found in the cytoplasm. It catalyses the reaction tRNA(Arg) + L-arginine + ATP = L-arginyl-tRNA(Arg) + AMP + diphosphate. The polypeptide is Arginine--tRNA ligase (Coxiella burnetii (strain RSA 331 / Henzerling II)).